Reading from the N-terminus, the 312-residue chain is Polyprenyl transferase atnF (312 aa).

Asn9 is a glycosylation site (N-linked (GlcNAc...) asparagine). The next 9 membrane-spanning stretches (helical) occupy residues 30-50 (LHTIEGLSTASIGWLALFFYA), 64-84 (FIGIFATYQMTHCVFCLWNDI), 111-131 (AMWVFVLGVFASMGVTYWLLG), 132-152 (ADVTLTMVPIWVLSFIYPLCK), 154-174 (IIWAPQVVLGLTMALCVLPPW), 185-205 (GLLPASLFGAIFCWLVYLDLI), 229-249 (YLKAGLTVLGVLQVVCFVLAA), 255-275 (GFLLWVFGIAVWSASVPWSIM), and 288-308 (IFLVNAILGIYMAAVSGLNVS).

The protein belongs to the UbiA prenyltransferase family. Mg(2+) is required as a cofactor.

It localises to the membrane. The protein operates within secondary metabolite biosynthesis; terpenoid biosynthesis. In terms of biological role, polyprenyl transferase; part of the gene cluster that mediates the biosynthesis of the meroterpenoids arthripenoids. The pathway begins with the HR-PKS atnH that catalyzes two chain-extension steps to form a reduced triketide, which then primes the SAT domain in the NR-PKS atnG to initiate three more cycles of extension to give a linear hexaketide corresponding to the polyketide part of arthripenoids. The FAD-dependent monooxygenase atnJ then performs an oxidative decarboxylation at C11 of the atnH/atnG product, via an electrophilic aromatic hydroxylation with concomitant ipso-decarboxylation. The membrane-bound polyprenyl transferase atnF then introduces a farnesyl group before the FAD-dependent monooxygenase atnK functions as the first epoxidase on terminal C12'-C13' olefin, followed by a second epoxidation on C7'-C8' catalyzed by atnA. The terpene cyclase/mutase atnI then initiates the sequential tricyclic ring formation through protonation of the terminal epoxide and catalyzes the regioselective and stereoselective 6/6/6-tricyclic ring formation. The cytochrome P450 monooxygenase atnM is responsible for hydroxylating both C1' and C10'. The next steps may involve ketoreduction and acetyl transfer by the ketoreductase atnB and the acetyltransferase atnC, and lead to the production of arthripenoid B, the final biosynthetic product of the atn cluster. The hydroquinone moiety in arthripenoid B is prone to undergo spontaneous oxidation to afford a benzoquinone compound, a key intermediate for generating structure diversity. For instance, addition of a cysteine followed by ring contraction gives arthripenoid A, tautomerization gives the main product arthripenoid C, addition of a molecular of water or amine affords arthripenoid D or E, respectively, and loss of one water forms arthripenoid F. This Arthrinium sp protein is Polyprenyl transferase atnF.